We begin with the raw amino-acid sequence, 431 residues long: MPAIVLIGAQWGDEGKGKATDLLGGSVQWVVRYQGGNNAGHTVVLPNGENFALHLIPSGILTPGVTNVIGNGVVVDPGVLLTELAGLEERGIDTSGLILSADAHLLMPYHVAIDKVTERYLGSKKIGTTGRGIGPCYQDKVARIGIRVADVLDEESLRQKVHAALEFKNQVLVKIYNRKALDPDQVVDGVLEQAEGFKHRIADARLQLNQALERGETVLLEGSQGTLLDVDHGTYPFVTSSNPTAGGASVGSGIGPTRITTVLGILKAYTTRVGSGPFPTELFDEHGAYLAKTGGEVGVTTGRARRCGWFDAVIARYATRVNGITDYFLTKLDVLSSLQTVPICVGYEVDGKRTNEMPMTQSEIYRATPVYEELPGWWEDISGARQFEDLPAKAQDYVLRLEELAGAPMSCIGVGPGRDQTIVRRDILSRS.

GTP contacts are provided by residues 12-18 (GDEGKGK) and 40-42 (GHT). Residue Asp-13 is the Proton acceptor of the active site. Asp-13 and Gly-40 together coordinate Mg(2+). IMP is bound by residues 13-16 (DEGK), 38-41 (NAGH), Thr-129, Arg-143, Gln-224, Thr-239, and Arg-303. The active-site Proton donor is the His-41. Substrate is bound at residue 299-305 (VTTGRAR). Residues Arg-305, 331 to 333 (KLD), and 413 to 415 (GVG) contribute to the GTP site.

The protein belongs to the adenylosuccinate synthetase family. In terms of assembly, homodimer. The cofactor is Mg(2+).

Its subcellular location is the cytoplasm. It catalyses the reaction IMP + L-aspartate + GTP = N(6)-(1,2-dicarboxyethyl)-AMP + GDP + phosphate + 2 H(+). The protein operates within purine metabolism; AMP biosynthesis via de novo pathway; AMP from IMP: step 1/2. Functionally, plays an important role in the de novo pathway of purine nucleotide biosynthesis. Catalyzes the first committed step in the biosynthesis of AMP from IMP. The sequence is that of Adenylosuccinate synthetase from Mycobacteroides abscessus (strain ATCC 19977 / DSM 44196 / CCUG 20993 / CIP 104536 / JCM 13569 / NCTC 13031 / TMC 1543 / L948) (Mycobacterium abscessus).